Here is a 461-residue protein sequence, read N- to C-terminus: tRNA modification GTPase MnmE (461 aa).

(6S)-5-formyl-5,6,7,8-tetrahydrofolate is bound by residues Lys32, Glu89, and Lys128. In terms of domain architecture, TrmE-type G spans 224–387 (GHALSIVGKP…LGQKISAFFP (164 aa)). Asn234 lines the K(+) pocket. GTP-binding positions include 234–239 (NAGKSS), 253–259 (SDIKGTT), and 278–281 (DTAG). Ser238 lines the Mg(2+) pocket. Residues Ser253, Ile255, and Thr258 each coordinate K(+). Thr259 lines the Mg(2+) pocket. Residue Lys461 coordinates (6S)-5-formyl-5,6,7,8-tetrahydrofolate.

It belongs to the TRAFAC class TrmE-Era-EngA-EngB-Septin-like GTPase superfamily. TrmE GTPase family. In terms of assembly, homodimer. Heterotetramer of two MnmE and two MnmG subunits. Requires K(+) as cofactor.

Its subcellular location is the cytoplasm. In terms of biological role, exhibits a very high intrinsic GTPase hydrolysis rate. Involved in the addition of a carboxymethylaminomethyl (cmnm) group at the wobble position (U34) of certain tRNAs, forming tRNA-cmnm(5)s(2)U34. The chain is tRNA modification GTPase MnmE from Helicobacter pylori (strain HPAG1).